The following is a 441-amino-acid chain: Peroxisome proliferator-activated receptor delta (441 aa).

The interval 1–58 (MEQPPGEAAEVREEEEKKEVAEAEGAPELNGGPERSLPSSSYTDLSRSSSPPSLLDQL) is disordered. The span at 9 to 21 (AEVREEEEKKEVA) shows a compositional bias: basic and acidic residues. A compositionally biased stretch (low complexity) spans 36 to 55 (SLPSSSYTDLSRSSSPPSLL). Positions 70-145 (LNMECRVCGD…LGMSHNAIRF (76 aa)) form a DNA-binding region, nuclear receptor. NR C4-type zinc fingers lie at residues 74-94 (CRVC…CEGC) and 111-133 (CERI…FQKC). In terms of domain architecture, NR LBD spans 211–439 (FVIHDIETLW…HPLLQEIYKD (229 aa)).

It belongs to the nuclear hormone receptor family. NR1 subfamily. Heterodimer with the retinoid X receptor. Interacts (via domain NR LBD) with CRY1 and CRY2 in a ligand-dependent manner. Post-translationally, 'Lys-48'-linked polyubiquitinated; leading to proteasomal degradation. Deubiquitinated and stabilized by OTUD3.

It localises to the nucleus. In terms of biological role, ligand-activated transcription factor key mediator of energy metabolism in adipose tissues. Receptor that binds peroxisome proliferators such as hypolipidemic drugs and fatty acids. Has a preference for poly-unsaturated fatty acids, such as gamma-linoleic acid and eicosapentanoic acid. Once activated by a ligand, the receptor binds to promoter elements of target genes. Regulates the peroxisomal beta-oxidation pathway of fatty acids. Functions as a transcription activator for the acyl-CoA oxidase gene. Decreases expression of NPC1L1 once activated by a ligand. The polypeptide is Peroxisome proliferator-activated receptor delta (PPARD) (Canis lupus familiaris (Dog)).